Consider the following 204-residue polypeptide: High frequency lysogenization protein HflD homolog (204 aa).

Belongs to the HflD family.

The protein resides in the cytoplasm. It is found in the cell inner membrane. In Stenotrophomonas maltophilia (strain K279a), this protein is High frequency lysogenization protein HflD homolog.